We begin with the raw amino-acid sequence, 290 residues long: Transcription cofactor vestigial-like protein 4 (290 aa).

M1 is subject to N-acetylmethionine. The span at 17–30 (ADDEKREAALRGEP) shows a compositional bias: basic and acidic residues. Disordered regions lie at residues 17–65 (ADDE…PGDE), 85–106 (LNKT…SPIE), 140–161 (LDAS…QQNR), and 254–290 (AAKD…SVVS). Phosphoserine is present on S52. Positions 92–105 (DCRRDPRERSRSPI) are enriched in basic and acidic residues. Phosphoserine is present on S149. The segment covering 150–161 (PTLTPGERQQNR) has biased composition (polar residues). T153 carries the post-translational modification Phosphothreonine. Positions 272-290 (PASPSAHMVSHSHSPSVVS) are enriched in low complexity. At S274 the chain carries Phosphoserine.

The protein belongs to the vestigial family. In terms of assembly, interacts with TEFs. Interacts with IRF2BP2.

The protein resides in the nucleus. May act as a specific coactivator for the mammalian TEFs. In Homo sapiens (Human), this protein is Transcription cofactor vestigial-like protein 4.